We begin with the raw amino-acid sequence, 465 residues long: UDP-N-acetylmuramate--L-alanine ligase (465 aa).

114–120 (GTHGKTT) serves as a coordination point for ATP.

The protein belongs to the MurCDEF family.

The protein localises to the cytoplasm. It carries out the reaction UDP-N-acetyl-alpha-D-muramate + L-alanine + ATP = UDP-N-acetyl-alpha-D-muramoyl-L-alanine + ADP + phosphate + H(+). It functions in the pathway cell wall biogenesis; peptidoglycan biosynthesis. Cell wall formation. The polypeptide is UDP-N-acetylmuramate--L-alanine ligase (Chelativorans sp. (strain BNC1)).